We begin with the raw amino-acid sequence, 539 residues long: Squalene monooxygenase SE1 (539 aa).

The next 2 membrane-spanning stretches (helical) occupy residues 22–42 and 71–91; these read LLID…FLLL and IAGS…ALAY. Residues 84 to 85, 104 to 105, arginine 112, arginine 183, valine 199, aspartate 361, and methionine 374 each bind FAD; these read VA and ER. Residues 472–492 form a helical membrane-spanning segment; sequence LFLHFFAVAIYGVGRLLIPFP.

It belongs to the squalene monooxygenase family. It depends on FAD as a cofactor. Mostly expressed in flower buds and leaves, and, to a lower extent, at high levels thought, in roots and petioles. In petioles, preferentially observed in vascular bundle tissue (phloem cells and parenchymatous cells near xylem) and resin ducts.

It localises to the microsome membrane. The protein resides in the endoplasmic reticulum membrane. The enzyme catalyses squalene + reduced [NADPH--hemoprotein reductase] + O2 = (S)-2,3-epoxysqualene + oxidized [NADPH--hemoprotein reductase] + H2O + H(+). It functions in the pathway terpene metabolism; lanosterol biosynthesis; lanosterol from farnesyl diphosphate: step 2/3. Functionally, component of the triterpene saponins (e.g. ginsenosides or panaxosides) and phytosterols biosynthetic pathways. Catalyzes the first oxygenation step in sterol biosynthesis and is suggested to be one of the rate-limiting enzymes in this pathway. The sequence is that of Squalene monooxygenase SE1 from Panax ginseng (Korean ginseng).